The following is a 155-amino-acid chain: UPF0260 protein R01011 (155 aa).

The protein belongs to the UPF0260 family.

In Rhizobium meliloti (strain 1021) (Ensifer meliloti), this protein is UPF0260 protein R01011.